The chain runs to 401 residues: Tyrosine--tRNA ligase (401 aa).

Positions 41 to 50 match the 'HIGH' region motif; the sequence is PSRPDLHLGH. Positions 225–229 match the 'KMSKS' region motif; that stretch reads KMSKS. An ATP-binding site is contributed by Lys-228. The S4 RNA-binding domain maps to 334–395; that stretch reads KNIVDLLVEI…GKRKFYRISG (62 aa).

This sequence belongs to the class-I aminoacyl-tRNA synthetase family. TyrS type 2 subfamily. In terms of assembly, homodimer.

Its subcellular location is the cytoplasm. The enzyme catalyses tRNA(Tyr) + L-tyrosine + ATP = L-tyrosyl-tRNA(Tyr) + AMP + diphosphate + H(+). Functionally, catalyzes the attachment of tyrosine to tRNA(Tyr) in a two-step reaction: tyrosine is first activated by ATP to form Tyr-AMP and then transferred to the acceptor end of tRNA(Tyr). This is Tyrosine--tRNA ligase from Thermotoga maritima (strain ATCC 43589 / DSM 3109 / JCM 10099 / NBRC 100826 / MSB8).